Here is a 301-residue protein sequence, read N- to C-terminus: 33 kDa chaperonin (301 aa).

2 disulfide bridges follow: C239–C241 and C272–C275.

This sequence belongs to the HSP33 family. Under oxidizing conditions two disulfide bonds are formed involving the reactive cysteines. Under reducing conditions zinc is bound to the reactive cysteines and the protein is inactive.

It is found in the cytoplasm. Redox regulated molecular chaperone. Protects both thermally unfolding and oxidatively damaged proteins from irreversible aggregation. Plays an important role in the bacterial defense system toward oxidative stress. The sequence is that of 33 kDa chaperonin from Nostoc punctiforme (strain ATCC 29133 / PCC 73102).